The chain runs to 245 residues: 1-(5-phosphoribosyl)-5-[(5-phosphoribosylamino)methylideneamino] imidazole-4-carboxamide isomerase (245 aa).

Asp7 acts as the Proton acceptor in catalysis. Asp129 functions as the Proton donor in the catalytic mechanism.

The protein belongs to the HisA/HisF family.

The protein localises to the cytoplasm. It carries out the reaction 1-(5-phospho-beta-D-ribosyl)-5-[(5-phospho-beta-D-ribosylamino)methylideneamino]imidazole-4-carboxamide = 5-[(5-phospho-1-deoxy-D-ribulos-1-ylimino)methylamino]-1-(5-phospho-beta-D-ribosyl)imidazole-4-carboxamide. It functions in the pathway amino-acid biosynthesis; L-histidine biosynthesis; L-histidine from 5-phospho-alpha-D-ribose 1-diphosphate: step 4/9. This is 1-(5-phosphoribosyl)-5-[(5-phosphoribosylamino)methylideneamino] imidazole-4-carboxamide isomerase from Shewanella loihica (strain ATCC BAA-1088 / PV-4).